The following is a 403-amino-acid chain: F-box only protein 22 (403 aa).

Met1 carries the post-translational modification N-acetylmethionine. The 47-residue stretch at 21–67 folds into the F-box domain; it reads FVLSNLAEVVERVLTFLPAKALLRVACVCRLWRECVRRVLRTHRSVT. Thr127 carries the phosphothreonine modification. At Ser128 the chain carries Phosphoserine. Residue Lys194 is modified to N6-acetyllysine.

As to quaternary structure, directly interacts with SKP1 and CUL1. Interacts (via C-terminal) with KDM4A. Interacts with TP53. Interacts with MTOR; this interaction promotes 'lys-27'-linked ubiquitination of MTOR. (Microbial infection) Interacts with SARS_COV-2 protein NSP5; this interaction attenuates NSP5-mediated inhibition of innate immunity. In terms of processing, phosphorylated by EIF2AK4 at Thr-127 causes cytoplasmic retention of FBXO22. Predominantly expressed in liver, also enriched in cardiac muscle.

It localises to the cytoplasm. The protein resides in the nucleus. The protein localises to the myofibril. Its subcellular location is the sarcomere. It is found in the z line. Substrate-recognition component of the SCF (SKP1-CUL1-F-box protein)-type E3 ubiquitin ligase complex that is implicated in the control of various cellular processes such as cell cycle control, transcriptional regulation, DNA damage repair, and apoptosis. Promotes the proteasome-dependent degradation of key sarcomeric proteins, such as alpha-actinin (ACTN2) and filamin-C (FLNC), essential for maintenance of normal contractile function. Acts as a key regulator of histone methylation marks namely H3K9 and H3K36 methylation through the regulation of histone demethylase KDM4A protein levels. In complex with KDM4A, also regulates the abundance of TP53 by targeting methylated TP53 for degradation at the late senescent stage. Under oxidative stress, promotes the ubiquitination and degradation of BACH1. Mechanistically, reactive oxygen species (ROS) covalently modify cysteine residues on the bZIP domain of BACH1, leading to its release from chromatin and making it accessible to FBXO22. Upon amino acid depletion, mediates 'Lys-27'-linked ubiquitination of MTOR and thereby inhibits substrate recruitment to mTORC1. Also inhibits SARS-CoV-2 replication by inducing NSP5 degradation. This Homo sapiens (Human) protein is F-box only protein 22 (FBXO22).